The sequence spans 244 residues: 14-3-3 protein beta/alpha-1 (244 aa).

M1 bears the N-acetylmethionine mark.

Belongs to the 14-3-3 family. In terms of assembly, homodimer, and heterodimer with other family members. Expressed in brain, gill, heart, intestine, kidney, liver, ovary, skin, spleen and testis.

It is found in the cytoplasm. Functionally, adapter protein implicated in the regulation of a large spectrum of both general and specialized signaling pathways. Binds to a large number of partners, usually by recognition of a phosphoserine or phosphothreonine motif. Binding generally results in the modulation of the activity of the binding partner. In Oncorhynchus mykiss (Rainbow trout), this protein is 14-3-3 protein beta/alpha-1.